The sequence spans 357 residues: 3-isopropylmalate dehydrogenase (357 aa).

76–89 is a binding site for NAD(+); sequence GPQWDTIDPALRPE. Substrate contacts are provided by Arg96, Arg106, Arg134, and Asp224. Asp224, Asp248, and Asp252 together coordinate Mg(2+). 282–294 is an NAD(+) binding site; it reads GSAPDIAGQGVAN.

This sequence belongs to the isocitrate and isopropylmalate dehydrogenases family. LeuB type 1 subfamily. In terms of assembly, homodimer. The cofactor is Mg(2+). It depends on Mn(2+) as a cofactor.

Its subcellular location is the cytoplasm. The catalysed reaction is (2R,3S)-3-isopropylmalate + NAD(+) = 4-methyl-2-oxopentanoate + CO2 + NADH. Its pathway is amino-acid biosynthesis; L-leucine biosynthesis; L-leucine from 3-methyl-2-oxobutanoate: step 3/4. Catalyzes the oxidation of 3-carboxy-2-hydroxy-4-methylpentanoate (3-isopropylmalate) to 3-carboxy-4-methyl-2-oxopentanoate. The product decarboxylates to 4-methyl-2 oxopentanoate. The polypeptide is 3-isopropylmalate dehydrogenase (Xylella fastidiosa (strain Temecula1 / ATCC 700964)).